The sequence spans 514 residues: Peptide chain release factor 3 (514 aa).

In terms of domain architecture, tr-type G spans 8–268 (KKRRTFAIIS…IFLKFAPEPH (261 aa)). Residues 17 to 24 (SHPDAGKT), 85 to 89 (DTPGH), and 139 to 142 (NKLD) contribute to the GTP site.

It belongs to the TRAFAC class translation factor GTPase superfamily. Classic translation factor GTPase family. PrfC subfamily.

The protein localises to the cytoplasm. Its function is as follows. Increases the formation of ribosomal termination complexes and stimulates activities of RF-1 and RF-2. It binds guanine nucleotides and has strong preference for UGA stop codons. It may interact directly with the ribosome. The stimulation of RF-1 and RF-2 is significantly reduced by GTP and GDP, but not by GMP. This chain is Peptide chain release factor 3, found in Streptococcus pneumoniae (strain CGSP14).